The sequence spans 257 residues: Proteasome assembly chaperone 1 (257 aa).

The protein belongs to the PSMG1 family. In terms of assembly, forms a heterodimer with psmg2.

Functionally, chaperone protein which promotes assembly of the 20S proteasome as part of a heterodimer with psmg2. The chain is Proteasome assembly chaperone 1 (psmg1) from Nematostella vectensis (Starlet sea anemone).